The chain runs to 454 residues: GA-binding protein alpha chain (454 aa).

The PNT domain occupies 168-251 (AALEGYRKEQ…SHLELLRKYV (84 aa)). The disordered stretch occupies residues 295–316 (KVQRSPRISGEDRSSPGNRTGN). A Phosphoserine modification is found at S303. Positions 320–400 (IQLWQFLLEL…QGKRFVYKFV (81 aa)) form a DNA-binding region, ETS.

This sequence belongs to the ETS family. As to quaternary structure, heterotetramer of two alpha and two beta subunits. Ubiquitous.

The protein resides in the nucleus. Transcription factor capable of interacting with purine rich repeats (GA repeats). Positively regulates transcription of transcriptional repressor Rhit/Zpf13. The polypeptide is GA-binding protein alpha chain (Gabpa) (Mus musculus (Mouse)).